Reading from the N-terminus, the 359-residue chain is tRNA-specific 2-thiouridylase MnmA (359 aa).

ATP contacts are provided by residues 6 to 13 and Leu32; that span reads AMSGGVDS. Cys97 (nucleophile) is an active-site residue. Cys97 and Cys195 are disulfide-bonded. Gly121 lines the ATP pocket. Positions 144-146 are interaction with tRNA; that stretch reads KDQ. Cys195 functions as the Cysteine persulfide intermediate in the catalytic mechanism.

It belongs to the MnmA/TRMU family.

It is found in the cytoplasm. The catalysed reaction is S-sulfanyl-L-cysteinyl-[protein] + uridine(34) in tRNA + AH2 + ATP = 2-thiouridine(34) in tRNA + L-cysteinyl-[protein] + A + AMP + diphosphate + H(+). Functionally, catalyzes the 2-thiolation of uridine at the wobble position (U34) of tRNA, leading to the formation of s(2)U34. In Tropheryma whipplei (strain Twist) (Whipple's bacillus), this protein is tRNA-specific 2-thiouridylase MnmA.